The following is a 165-amino-acid chain: Crossover junction endodeoxyribonuclease RuvC (165 aa).

Catalysis depends on residues Asp-7, Glu-67, and Asp-140. Asp-7, Glu-67, and Asp-140 together coordinate Mg(2+).

It belongs to the RuvC family. As to quaternary structure, homodimer which binds Holliday junction (HJ) DNA. The HJ becomes 2-fold symmetrical on binding to RuvC with unstacked arms; it has a different conformation from HJ DNA in complex with RuvA. In the full resolvosome a probable DNA-RuvA(4)-RuvB(12)-RuvC(2) complex forms which resolves the HJ. Requires Mg(2+) as cofactor.

It localises to the cytoplasm. It catalyses the reaction Endonucleolytic cleavage at a junction such as a reciprocal single-stranded crossover between two homologous DNA duplexes (Holliday junction).. Its function is as follows. The RuvA-RuvB-RuvC complex processes Holliday junction (HJ) DNA during genetic recombination and DNA repair. Endonuclease that resolves HJ intermediates. Cleaves cruciform DNA by making single-stranded nicks across the HJ at symmetrical positions within the homologous arms, yielding a 5'-phosphate and a 3'-hydroxyl group; requires a central core of homology in the junction. The consensus cleavage sequence is 5'-(A/T)TT(C/G)-3'. Cleavage occurs on the 3'-side of the TT dinucleotide at the point of strand exchange. HJ branch migration catalyzed by RuvA-RuvB allows RuvC to scan DNA until it finds its consensus sequence, where it cleaves and resolves the cruciform DNA. The chain is Crossover junction endodeoxyribonuclease RuvC from Thermotoga petrophila (strain ATCC BAA-488 / DSM 13995 / JCM 10881 / RKU-1).